A 418-amino-acid chain; its full sequence is Beta-arrestin-1 (418 aa).

Positions 1–163 (MGDKGTRVFK…LEEKIHKRNS (163 aa)) are interaction with SRC. The interval 45–86 (PEYLKERRVYVTLTCAFRYGREDLDVLGLTFRKDLFVANVQS) is interaction with CHRM2. A Phosphotyrosine modification is found at tyrosine 47. Residues lysine 250, methionine 255, lysine 324, and lysine 326 each coordinate 1D-myo-inositol hexakisphosphate. The interaction with TRAF6 stretch occupies residues 318–418 (IVSYKVKVKL…GTGSPHLNNR (101 aa)). Disordered stretches follow at residues 353-375 (HPKPKEEPPHREVPESETPVDTN) and 397-418 (KGMKDDKDEEDDGTGSPHLNNR). Residues 355-366 (KPKEEPPHREVP) show a composition bias toward basic and acidic residues. At serine 412 the chain carries Phosphoserine.

The protein belongs to the arrestin family. In terms of assembly, monomer. Homodimer. Homooligomer; the self-association is mediated by InsP6-binding. Heterooligomer with ARRB2; the association is mediated by InsP6-binding. Interacts with ADRB2 (phosphorylated). Interacts with CHRM2 (phosphorylated). Interacts with LHCGR. Interacts with CYTH2 and CASR. Interacts with AP2B1 (dephosphorylated); phosphorylation of AP2B1 disrupts the interaction. Interacts (dephosphorylated at Ser-412) with CLTC. Interacts with CCR2 and GRK2. Interacts with CRR5. Interacts with PTAFR (phosphorylated on serine residues). Interacts with CLTC and MAP2K3. Interacts with CREB1. Interacts with TRAF6. Interacts with IGF1R and MDM2. Interacts with C5AR1. Interacts with PDE4D. Interacts with SRC (via the SH3 domain and the protein kinase domain); the interaction is independent of the phosphorylation state of SRC C-terminus. Interacts with TACR1. Interacts with RAF1. Interacts with DVL1; the interaction is enhanced by phosphorylation of DVL1. Interacts with DVL2; the interaction is enhanced by phosphorylation of DVL2. Interacts with IGF1R. Interacts with CHUK, IKBKB and MAP3K14. Associates with MAP kinase p38. Part of a MAPK signaling complex consisting of TACR1, ARRB1, SRC, MAPK1 (activated) and MAPK3 (activated). Part of a MAPK signaling complex consisting of F2RL1, ARRB1, RAF1, MAPK1 (activated) and MAPK3 (activated). Interacts with GPR143. Interacts with MAP2K4/MKK4. Interacts with HCK and CXCR1 (phosphorylated). Interacts with ACKR3 and ACKR4. Interacts with ARRDC1; the interaction is direct. Interacts with GPR61, GPR62 and GPR135. Constitutively phosphorylated at in the cytoplasm. At the plasma membrane, is rapidly dephosphorylated, a process that is required for clathrin binding and ADRB2 endocytosis but not for ADRB2 binding and desensitization. Once internalized, is rephosphorylated. In terms of processing, the ubiquitination status appears to regulate the formation and trafficking of beta-arrestin-GPCR complexes and signaling. Ubiquitination appears to occur GPCR-specific. Ubiquitinated by MDM2; the ubiquitination is required for rapid internalization of ADRB2. Deubiquitinated by USP33; the deubiquitination leads to a dissociation of the beta-arrestin-GPCR complex. Stimulation of a class A GPCR, such as ADRB2, induces transient ubiquitination and subsequently promotes association with USP33.

The protein localises to the cytoplasm. The protein resides in the nucleus. Its subcellular location is the cell membrane. It localises to the membrane. It is found in the clathrin-coated pit. The protein localises to the cell projection. The protein resides in the pseudopodium. Its subcellular location is the cytoplasmic vesicle. Functions in regulating agonist-mediated G-protein coupled receptor (GPCR) signaling by mediating both receptor desensitization and resensitization processes. During homologous desensitization, beta-arrestins bind to the GPRK-phosphorylated receptor and sterically preclude its coupling to the cognate G-protein; the binding appears to require additional receptor determinants exposed only in the active receptor conformation. The beta-arrestins target many receptors for internalization by acting as endocytic adapters (CLASPs, clathrin-associated sorting proteins) and recruiting the GPRCs to the adapter protein 2 complex 2 (AP-2) in clathrin-coated pits (CCPs). However, the extent of beta-arrestin involvement appears to vary significantly depending on the receptor, agonist and cell type. Internalized arrestin-receptor complexes traffic to intracellular endosomes, where they remain uncoupled from G-proteins. Two different modes of arrestin-mediated internalization occur. Class A receptors, like ADRB2, OPRM1, ENDRA, D1AR and ADRA1B dissociate from beta-arrestin at or near the plasma membrane and undergo rapid recycling. Class B receptors, like AVPR2, AGTR1, NTSR1, TRHR and TACR1 internalize as a complex with arrestin and traffic with it to endosomal vesicles, presumably as desensitized receptors, for extended periods of time. Receptor resensitization then requires that receptor-bound arrestin is removed so that the receptor can be dephosphorylated and returned to the plasma membrane. Involved in internalization of P2RY4 and UTP-stimulated internalization of P2RY2. Involved in phosphorylation-dependent internalization of OPRD1 ands subsequent recycling. Involved in the degradation of cAMP by recruiting cAMP phosphodiesterases to ligand-activated receptors. Beta-arrestins function as multivalent adapter proteins that can switch the GPCR from a G-protein signaling mode that transmits short-lived signals from the plasma membrane via small molecule second messengers and ion channels to a beta-arrestin signaling mode that transmits a distinct set of signals that are initiated as the receptor internalizes and transits the intracellular compartment. Acts as a signaling scaffold for MAPK pathways such as MAPK1/3 (ERK1/2). ERK1/2 activated by the beta-arrestin scaffold is largely excluded from the nucleus and confined to cytoplasmic locations such as endocytic vesicles, also called beta-arrestin signalosomes. Recruits c-Src/SRC to ADRB2 resulting in ERK activation. GPCRs for which the beta-arrestin-mediated signaling relies on both ARRB1 and ARRB2 (codependent regulation) include ADRB2, F2RL1 and PTH1R. For some GPCRs the beta-arrestin-mediated signaling relies on either ARRB1 or ARRB2 and is inhibited by the other respective beta-arrestin form (reciprocal regulation). Inhibits ERK1/2 signaling in AGTR1- and AVPR2-mediated activation (reciprocal regulation). Is required for SP-stimulated endocytosis of NK1R and recruits c-Src/SRC to internalized NK1R resulting in ERK1/2 activation, which is required for the antiapoptotic effects of SP. Is involved in proteinase-activated F2RL1-mediated ERK activity. Acts as a signaling scaffold for the AKT1 pathway. Is involved in alpha-thrombin-stimulated AKT1 signaling. Is involved in IGF1-stimulated AKT1 signaling leading to increased protection from apoptosis. Involved in activation of the p38 MAPK signaling pathway and in actin bundle formation. Involved in F2RL1-mediated cytoskeletal rearrangement and chemotaxis. Involved in AGTR1-mediated stress fiber formation by acting together with GNAQ to activate RHOA. Appears to function as signaling scaffold involved in regulation of MIP-1-beta-stimulated CCR5-dependent chemotaxis. Involved in attenuation of NF-kappa-B-dependent transcription in response to GPCR or cytokine stimulation by interacting with and stabilizing CHUK. May serve as nuclear messenger for GPCRs. Involved in OPRD1-stimulated transcriptional regulation by translocating to CDKN1B and FOS promoter regions and recruiting EP300 resulting in acetylation of histone H4. Involved in regulation of LEF1 transcriptional activity via interaction with DVL1 and/or DVL2 Also involved in regulation of receptors other than GPCRs. Involved in Toll-like receptor and IL-1 receptor signaling through the interaction with TRAF6 which prevents TRAF6 autoubiquitination and oligomerization required for activation of NF-kappa-B and JUN. Involved in IL8-mediated granule release in neutrophils. Binds phosphoinositides. Binds inositolhexakisphosphate (InsP6). Required for atypical chemokine receptor ACKR2-induced RAC1-LIMK1-PAK1-dependent phosphorylation of cofilin (CFL1) and for the up-regulation of ACKR2 from endosomal compartment to cell membrane, increasing its efficiency in chemokine uptake and degradation. Involved in the internalization of the atypical chemokine receptor ACKR3. Negatively regulates the NOTCH signaling pathway by mediating the ubiquitination and degradation of NOTCH1 by ITCH. Participates in the recruitment of the ubiquitin-protein ligase to the receptor. This Mus musculus (Mouse) protein is Beta-arrestin-1 (Arrb1).